The primary structure comprises 21 residues: GMASTAGSVLGKLAKTAIGIL.

Leucine amide is present on Leu21.

Expressed by the skin glands.

It localises to the secreted. Functionally, antimicrobial peptide. The polypeptide is Peptide PGLa-R6 (Xenopus ruwenzoriensis (Uganda clawed frog)).